Here is a 61-residue protein sequence, read N- to C-terminus: Small ribosomal subunit protein uS14B (61 aa).

C24, C27, C40, and C43 together coordinate Zn(2+).

This sequence belongs to the universal ribosomal protein uS14 family. Zinc-binding uS14 subfamily. Part of the 30S ribosomal subunit. Contacts proteins S3 and S10. It depends on Zn(2+) as a cofactor.

Binds 16S rRNA, required for the assembly of 30S particles and may also be responsible for determining the conformation of the 16S rRNA at the A site. This Shouchella clausii (strain KSM-K16) (Alkalihalobacillus clausii) protein is Small ribosomal subunit protein uS14B.